We begin with the raw amino-acid sequence, 679 residues long: NADPH--cytochrome P450 reductase (679 aa).

Over Met1 to Ser21 the chain is Lumenal. Residues Val22–Phe42 traverse the membrane as a helical segment. At Leu43–Ser679 the chain is on the cytoplasmic side. At Ser64 the chain carries Phosphoserine. Residues Ile81 to Trp225 form the Flavodoxin-like domain. Residues Ser87 to Ala92, Ala139 to Gly142, Leu174 to Asn183, and Asp209 each bind FMN. One can recognise an FAD-binding FR-type domain in the interval Lys280–Pro522. Arg299 lines the NADP(+) pocket. FAD contacts are provided by residues Arg425, Arg455 to Ser458, Cys473 to Val475, Tyr479, and Gly489 to Thr492. NADP(+) is bound by residues Thr536, Ser597–Arg598, Lys603–Gln607, and Asp640. Trp678 contacts FAD.

It belongs to the NADPH--cytochrome P450 reductase family. This sequence in the N-terminal section; belongs to the flavodoxin family. In the C-terminal section; belongs to the flavoprotein pyridine nucleotide cytochrome reductase family. FAD is required as a cofactor. It depends on FMN as a cofactor.

It localises to the endoplasmic reticulum membrane. The enzyme catalyses 2 oxidized [cytochrome P450] + NADPH = 2 reduced [cytochrome P450] + NADP(+) + H(+). This enzyme is required for electron transfer from NADP to cytochrome P450 in microsomes. It can also provide electron transfer to heme oxygenase and cytochrome B5. The protein is NADPH--cytochrome P450 reductase of Oryctolagus cuniculus (Rabbit).